Consider the following 151-residue polypeptide: Proteolipid protein 2 (151 aa).

Positions 19–137 (FSRTKKGILL…DAYITFPLKQ (119 aa)) constitute an MARVEL domain. The next 4 membrane-spanning stretches (helical) occupy residues 25-45 (GILL…FSAS), 48-68 (AYSS…VFYM), 85-105 (FFRS…VLVE), and 112-132 (IVAG…AYIT).

It is found in the membrane. Functionally, may play a role in cell differentiation in the intestinal epithelium. In Rattus norvegicus (Rat), this protein is Proteolipid protein 2 (Plp2).